We begin with the raw amino-acid sequence, 64 residues long: Large ribosomal subunit protein uL30 (64 aa).

Belongs to the universal ribosomal protein uL30 family. As to quaternary structure, part of the 50S ribosomal subunit.

This is Large ribosomal subunit protein uL30 from Syntrophus aciditrophicus (strain SB).